The chain runs to 196 residues: Calcineurin B homologous protein 2 (196 aa).

Glycine 2 carries the N-myristoyl glycine lipid modification. 4 EF-hand domains span residues 26–61, 71–106, 111–146, and 152–187; these read ASLL…AVNP, FPNG…PKQP, SRMN…MVGV, and QLES…MNIE. Position 27 is a phosphoserine (serine 27). Aspartate 124, aspartate 126, aspartate 128, lysine 130, and glutamate 135 together coordinate Ca(2+). Residues 137–148 carry the Nuclear export signal motif; sequence LQVLRLMVGVQV. 4 residues coordinate Ca(2+): aspartate 165, aspartate 167, aspartate 169, and glutamate 176.

The protein belongs to the calcineurin regulatory subunit family. CHP subfamily. In terms of assembly, interacts with PPP3CA. Interacts with SLC9A1/NHE1; the interaction occurs in a calcium-dependent manner. Interacts with SLC9A1/NHE1.

Its subcellular location is the cytoplasm. It localises to the nucleus. It is found in the cell membrane. Its function is as follows. Functions as an integral cofactor in cell pH regulation by controlling plasma membrane-type Na(+)/H(+) exchange activity. Binds to and activates SLC9A1/NHE1 in a serum-independent manner, thus increasing pH and protecting cells from serum deprivation-induced death. Also plays a role in the regulation of cell proliferation and tumor growth by increasing the phosphatase activity of PPP3CA in a calcium-dependent manner. Activator of the calcineurin/NFAT signaling pathway. Involved in the cytoplasmic translocation of the transcription factor NFATC3 to the nucleus. This chain is Calcineurin B homologous protein 2 (Chp2), found in Mus musculus (Mouse).